The primary structure comprises 343 residues: Uroporphyrinogen decarboxylase (343 aa).

Residues 25-29, Asp75, Tyr152, Ser207, and His323 contribute to the substrate site; that span reads RQAGR.

It belongs to the uroporphyrinogen decarboxylase family. As to quaternary structure, homodimer.

Its subcellular location is the cytoplasm. It carries out the reaction uroporphyrinogen III + 4 H(+) = coproporphyrinogen III + 4 CO2. It functions in the pathway porphyrin-containing compound metabolism; protoporphyrin-IX biosynthesis; coproporphyrinogen-III from 5-aminolevulinate: step 4/4. Its function is as follows. Catalyzes the decarboxylation of four acetate groups of uroporphyrinogen-III to yield coproporphyrinogen-III. The polypeptide is Uroporphyrinogen decarboxylase (Jannaschia sp. (strain CCS1)).